We begin with the raw amino-acid sequence, 307 residues long: tRNA dimethylallyltransferase (307 aa).

11-18 lines the ATP pocket; the sequence is GPTGSGKT. 13–18 is a binding site for substrate; the sequence is TGSGKT. The tract at residues 36 to 39 is interaction with substrate tRNA; it reads DSVA.

Belongs to the IPP transferase family. In terms of assembly, monomer. The cofactor is Mg(2+).

It carries out the reaction adenosine(37) in tRNA + dimethylallyl diphosphate = N(6)-dimethylallyladenosine(37) in tRNA + diphosphate. Functionally, catalyzes the transfer of a dimethylallyl group onto the adenine at position 37 in tRNAs that read codons beginning with uridine, leading to the formation of N6-(dimethylallyl)adenosine (i(6)A). This is tRNA dimethylallyltransferase from Koribacter versatilis (strain Ellin345).